The primary structure comprises 148 residues: Outer envelope pore protein 16-1, chloroplastic (148 aa).

Residues 2–73 (PSSTFSGTVS…EHALKKLCKE (72 aa)) form a contains 4 beta strands region. 3 consecutive transmembrane segments (helical) span residues 75-91 (VYWG…EYGI), 102-118 (NAML…SAVG), and 125-142 (IVID…SQFV).

This sequence belongs to the Tim17/Tim22/Tim23 family. Plastid outer envelope porin OEP16 (TC 1.B.30) subfamily. As to quaternary structure, homodimer and oligomers in membrane. Forms large complexes including TOC33, pPORA and OEP161 during pPORA import into plastids at the plastid envelope membrane. In terms of tissue distribution, expressed predominantly in leaves and cotyledons.

The protein localises to the plastid. Its subcellular location is the chloroplast outer membrane. It is found in the etioplast membrane. With respect to regulation, stimulated by GTP. Voltage-dependent high-conductance channel with a slight cation-selectivity; selective for amino acids but excludes triosephosphates or uncharged sugars. Non-essential amino acid-selective channel protein and translocation pore for NADPH:protochlorophyllide oxidoreductase A (PORA) and possibly PORB. Involved in PORA precursor (pPORA) import and thus confers photoprotection onto etiolated seedlings during greening. This is Outer envelope pore protein 16-1, chloroplastic (OEP161) from Arabidopsis thaliana (Mouse-ear cress).